A 63-amino-acid polypeptide reads, in one-letter code: Small ribosomal subunit protein eS17 (63 aa).

The protein belongs to the eukaryotic ribosomal protein eS17 family.

This Haloarcula marismortui (strain ATCC 43049 / DSM 3752 / JCM 8966 / VKM B-1809) (Halobacterium marismortui) protein is Small ribosomal subunit protein eS17 (rps17e).